Reading from the N-terminus, the 507-residue chain is ATP synthase subunit alpha, chloroplastic (507 aa).

170 to 177 (GDRQTGKT) provides a ligand contact to ATP.

It belongs to the ATPase alpha/beta chains family. As to quaternary structure, F-type ATPases have 2 components, CF(1) - the catalytic core - and CF(0) - the membrane proton channel. CF(1) has five subunits: alpha(3), beta(3), gamma(1), delta(1), epsilon(1). CF(0) has four main subunits: a, b, b' and c.

The protein resides in the plastid. Its subcellular location is the chloroplast thylakoid membrane. The catalysed reaction is ATP + H2O + 4 H(+)(in) = ADP + phosphate + 5 H(+)(out). Functionally, produces ATP from ADP in the presence of a proton gradient across the membrane. The alpha chain is a regulatory subunit. In Illicium oligandrum (Star anise), this protein is ATP synthase subunit alpha, chloroplastic.